The following is a 271-amino-acid chain: Ferric vulnibactin reductase VuuB (271 aa).

Residues 8–131 (VYPMLLDFVR…IGPAGPDPLI (124 aa)) form the FAD-binding FR-type domain.

Belongs to the SIP oxidoreductase family. In terms of assembly, monomer. FAD is required as a cofactor.

The protein localises to the cytoplasm. It carries out the reaction 2 a Fe(II)-siderophore + NAD(+) + H(+) = 2 a Fe(III)-siderophore + NADH. Ferric-siderophore reductase involved in iron removal from the siderophores after their transport into the cell. Acts as a major ferric-vulnibactin reductase catalyzing the reduction of Fe(3+)-vulnibactin, a catecholate siderophore synthesized by V.vulnificus. This Vibrio vulnificus (strain CMCP6) protein is Ferric vulnibactin reductase VuuB.